The primary structure comprises 304 residues: MNGIIPLWKERGMTSHDCVFKLRKILHTKKVGHTGTLDPEVEGVLPICIGRATKLAEYVTDEGKVYVAEITLGKSTTTEDATGETVMTKELADISADELQAALTKLTGKITQIPPMFSAVKVNGKKLYEYARAGIEVERPSRQVDIYSLTRLNGEATLNEANPTFQLEISCGKGTYIRTLAVMIGELLGYPAHMSKLERTRSGFFKKEDCLTLAEIDEMMQASDSSFLYPLEKGIESMAKLVIDEEIHAKVLNGGLLPKSLFIEVENEPRAALIFNDKLTAIYKPHPEKNELWKPEKVIELHQA.

Residue Asp-38 is the Nucleophile of the active site.

It belongs to the pseudouridine synthase TruB family. Type 1 subfamily.

The enzyme catalyses uridine(55) in tRNA = pseudouridine(55) in tRNA. Functionally, responsible for synthesis of pseudouridine from uracil-55 in the psi GC loop of transfer RNAs. This Listeria monocytogenes serotype 4b (strain F2365) protein is tRNA pseudouridine synthase B.